Consider the following 34-residue polypeptide: Cytochrome b6-f complex subunit 5 (34 aa).

The helical transmembrane segment at Leu5 to Ala25 threads the bilayer.

It belongs to the PetG family. As to quaternary structure, the 4 large subunits of the cytochrome b6-f complex are cytochrome b6, subunit IV (17 kDa polypeptide, PetD), cytochrome f and the Rieske protein, while the 4 small subunits are PetG, PetL, PetM and PetN. The complex functions as a dimer.

The protein resides in the plastid. It localises to the chloroplast thylakoid membrane. Component of the cytochrome b6-f complex, which mediates electron transfer between photosystem II (PSII) and photosystem I (PSI), cyclic electron flow around PSI, and state transitions. PetG is required for either the stability or assembly of the cytochrome b6-f complex. In Oltmannsiellopsis viridis (Marine flagellate), this protein is Cytochrome b6-f complex subunit 5.